Consider the following 1007-residue polypeptide: Serine/threonine-protein kinase PRP4 homolog (1007 aa).

The interval 1-102 (MAATEPPSLR…LSPAKRTKLD (102 aa)) is disordered. Residue Ala2 is modified to N-acetylalanine. Ser8, Ser21, Ser24, and Ser33 each carry phosphoserine. Composition is skewed to basic residues over residues 40–60 (KHSR…KHKH) and 68–82 (KKHK…HKRK). The segment covering 83–92 (EVIEASDKEG) has biased composition (basic and acidic residues). Phosphoserine occurs at positions 88 and 94. Residue Lys100 is modified to N6-acetyllysine; alternate. Lys100 participates in a covalent cross-link: Glycyl lysine isopeptide (Lys-Gly) (interchain with G-Cter in SUMO2); alternate. A Glycyl lysine isopeptide (Lys-Gly) (interchain with G-Cter in SUMO2) cross-link involves residue Lys112. Residue Lys118 forms a Glycyl lysine isopeptide (Lys-Gly) (interchain with G-Cter in SUMO2); alternate linkage. Lys118 participates in a covalent cross-link: Glycyl lysine isopeptide (Lys-Gly) (interchain with G-Cter in SUMO1); alternate. Position 132 is a phosphoserine (Ser132). Tyr141 is subject to Phosphotyrosine. Disordered regions lie at residues 141–535 (YESG…EDEE) and 560–583 (NISV…SPDD). Residues Ser143, Ser145, and Ser167 each carry the phosphoserine modification. Over residues 158 to 169 (GNRSSTRSSSTR) the composition is skewed to low complexity. Residues Lys171 and Lys178 each participate in a glycyl lysine isopeptide (Lys-Gly) (interchain with G-Cter in SUMO2) cross-link. Basic residues-rich tracts occupy residues 180–203 (SAKK…RKSK) and 215–231 (RSKS…SKRS). A phosphoserine mark is found at Ser240, Ser242, Ser258, Ser278, Ser292, and Ser294. Basic and acidic residues predominate over residues 248-271 (RSQEKVGKARSPAEEKMKSEEKGK). The span at 294–303 (SPVDLRDKSK) shows a compositional bias: basic and acidic residues. Residues 304-315 (DRRSRSKERKSK) show a composition bias toward basic residues. A compositionally biased stretch (basic and acidic residues) spans 316–325 (RSEIDKEKKP). A phosphoserine mark is found at Ser328, Ser354, Ser356, Ser366, and Ser368. Basic residues predominate over residues 342 to 367 (PSRRPGRSPKRRSLSPKLRDKSRRSR). At Thr385 the chain carries Phosphothreonine. Ser387 is modified (phosphoserine). 2 stretches are compositionally biased toward basic and acidic residues: residues 395 to 408 (RSLE…ERRR) and 415 to 429 (RPRD…RSKD). A phosphoserine mark is found at Ser427, Ser431, and Ser437. Residues 438-497 (PTRRRSRSPIRRRSRSPLRRSRSPRRRSRSPRRRDRSRRSRSRLRRRSRSRGGHRRRSRS) are compositionally biased toward basic residues. 8 positions are modified to phosphoserine: Ser518, Ser519, Ser520, Ser565, Ser569, Ser576, Ser578, and Ser580. Positions 518–535 (SSSDDNLEDFDVEEEDEE) are enriched in acidic residues. Positions 562-581 (SVPSEPSSPQSSTRSRSPSP) are enriched in low complexity. Residues Lys593 and Lys659 each participate in a glycyl lysine isopeptide (Lys-Gly) (interchain with G-Cter in SUMO2) cross-link. A Protein kinase domain is found at 687-1006 (YNVYGYTGQG…ALQHAFIQEK (320 aa)). ATP-binding positions include 693 to 701 (TGQGVFSNV) and Lys717. The residue at position 717 (Lys717) is an N6-acetyllysine. Asp815 serves as the catalytic Proton acceptor. Phosphotyrosine is present on Tyr849. Ser852 is subject to Phosphoserine.

It belongs to the protein kinase superfamily. CMGC Ser/Thr protein kinase family. As to quaternary structure, interacts with CLK1 C-terminus. Associates with the U5 snRNP and NCOR1 deacetylase complexes. Identified in the spliceosome C complex. In terms of processing, phosphorylated by CLK1. Autophosphorylated; phosphorylation inhibits interaction with its targets, such as PRPF6 or SMARCA4.

The protein localises to the nucleus. The protein resides in the chromosome. Its subcellular location is the centromere. It localises to the kinetochore. The enzyme catalyses L-seryl-[protein] + ATP = O-phospho-L-seryl-[protein] + ADP + H(+). The catalysed reaction is L-threonyl-[protein] + ATP = O-phospho-L-threonyl-[protein] + ADP + H(+). Serine/threonine kinase involved in spliceosomal assembly as well as mitosis and signaling regulation. Connects chromatin mediated regulation of transcription and pre-mRNA splicing. During spliceosomal assembly, interacts with and phosphorylates PRPF6 and PRPF31, components of the U4/U6-U5 tri-small nuclear ribonucleoprotein (snRNP), to facilitate the formation of the spliceosome B complex. Plays a role in regulating transcription and the spindle assembly checkpoint (SAC). Associates with U5 snRNP and NCOR1 deacetylase complexes which may allow a coordination of pre-mRNA splicing with chromatin remodeling events involved in transcriptional regulation. Associates and probably phosphorylates SMARCA4 and NCOR1. Phosphorylates SRSF1. Associates with kinetochores during mitosis and is necessary for recruitment and maintenance of the checkpoint proteins such as MAD1L1 and MAD12L1 at the kinetochores. Phosphorylates and regulates the activity of the transcription factors such as ELK1 and KLF13. Phosphorylates nuclear YAP1 and WWTR1/TAZ which induces nuclear exclusion and regulates Hippo signaling pathway, involved in tissue growth control. The sequence is that of Serine/threonine-protein kinase PRP4 homolog (Prp4k) from Mus musculus (Mouse).